A 656-amino-acid polypeptide reads, in one-letter code: Pentatricopeptide repeat-containing protein At1g62260, mitochondrial (656 aa).

15 PPR repeats span residues 70-104, 105-134, 135-169, 170-200, 203-227, 234-264, 280-310, 311-345, 346-372, 373-407, 408-438, 442-472, 474-508, 509-544, and 545-575; these read NTVT…DVVT, WNTM…MPSR, DSFS…NAVS, WSAM…DSSP, ALVA…YGSL, LVYA…IPDL, NVVS…MKDR, DTIS…DAHS, WNMM…TPEK, HTVS…GEKP, DPHT…VVKT, DVPV…MKLK, EVIT…GIYP, SHIT…KIEP, and QMEH…MPFE. Residues 580-655 form a type E motif region; sequence VWGALLDACR…ERGSSWVDSS (76 aa).

Belongs to the PPR family. PCMP-E subfamily.

The protein localises to the mitochondrion. This Arabidopsis thaliana (Mouse-ear cress) protein is Pentatricopeptide repeat-containing protein At1g62260, mitochondrial (PCMP-E10).